The primary structure comprises 367 residues: NADH-quinone oxidoreductase subunit D (367 aa).

It belongs to the complex I 49 kDa subunit family. In terms of assembly, NDH-1 is composed of 14 different subunits. Subunits NuoB, C, D, E, F, and G constitute the peripheral sector of the complex.

Its subcellular location is the cell membrane. The enzyme catalyses a quinone + NADH + 5 H(+)(in) = a quinol + NAD(+) + 4 H(+)(out). Its function is as follows. NDH-1 shuttles electrons from NADH, via FMN and iron-sulfur (Fe-S) centers, to quinones in the respiratory chain. The immediate electron acceptor for the enzyme in this species is believed to be ubiquinone. Couples the redox reaction to proton translocation (for every two electrons transferred, four hydrogen ions are translocated across the cytoplasmic membrane), and thus conserves the redox energy in a proton gradient. This chain is NADH-quinone oxidoreductase subunit D, found in Dehalococcoides mccartyi (strain ATCC BAA-2266 / KCTC 15142 / 195) (Dehalococcoides ethenogenes (strain 195)).